Here is a 412-residue protein sequence, read N- to C-terminus: MDQIILQDPELAQAIILESGRQIDKLELIASENIASTAVREAQSTILTNKYAEGYPGKRYYGGCEYVDIAENLAIERAKALFHSEYANVQPHSGSQANMGAYFALIKPRDTILGMNLSHGGHLTHGSPVNFSGRLFNIVSYGVNKETGLIDYEEVAKLAEKHKPQLIVAGASAYPRIIDFSKFRSIADTIGAKLLVDMAHIAGLVATNLHPSPIPYAHITTTTTHKTLRGPRGGMILSTEDMGKVINSQIFPGIQGGPLMHVIAAKAVALGEASKASFVTYQKQVILNAKTLAKQLLDAGFNLVSGGTDNHLLLIDLTNKKITGKDAEKALDQAGITVNKNTVPFETLSPFVTSGIRIGTPALTTRGLCEQDMIKVANWIVTALNNINNETQLKEINKEVTYFARQFPLFSW.

(6S)-5,6,7,8-tetrahydrofolate is bound by residues leucine 117 and 121-123 (GHL). N6-(pyridoxal phosphate)lysine is present on lysine 226. 349 to 351 (SPF) is a (6S)-5,6,7,8-tetrahydrofolate binding site.

It belongs to the SHMT family. Homodimer. Requires pyridoxal 5'-phosphate as cofactor.

The protein localises to the cytoplasm. The catalysed reaction is (6R)-5,10-methylene-5,6,7,8-tetrahydrofolate + glycine + H2O = (6S)-5,6,7,8-tetrahydrofolate + L-serine. The protein operates within one-carbon metabolism; tetrahydrofolate interconversion. It functions in the pathway amino-acid biosynthesis; glycine biosynthesis; glycine from L-serine: step 1/1. Catalyzes the reversible interconversion of serine and glycine with tetrahydrofolate (THF) serving as the one-carbon carrier. This reaction serves as the major source of one-carbon groups required for the biosynthesis of purines, thymidylate, methionine, and other important biomolecules. Also exhibits THF-independent aldolase activity toward beta-hydroxyamino acids, producing glycine and aldehydes, via a retro-aldol mechanism. In Lawsonia intracellularis (strain PHE/MN1-00), this protein is Serine hydroxymethyltransferase.